We begin with the raw amino-acid sequence, 122 residues long: Large ribosomal subunit protein uL14 (122 aa).

It belongs to the universal ribosomal protein uL14 family. As to quaternary structure, part of the 50S ribosomal subunit. Forms a cluster with proteins L3 and L19. In the 70S ribosome, L14 and L19 interact and together make contacts with the 16S rRNA in bridges B5 and B8.

Its function is as follows. Binds to 23S rRNA. Forms part of two intersubunit bridges in the 70S ribosome. In Mycoplasmopsis pulmonis (strain UAB CTIP) (Mycoplasma pulmonis), this protein is Large ribosomal subunit protein uL14.